The chain runs to 509 residues: Activin receptor type-1 (509 aa).

An N-terminal signal peptide occupies residues 1–20; that stretch reads MVDGVMILPVLVMIAFPFPS. Topologically, residues 21-123 are extracellular; that stretch reads MEDEKPKVNP…FPGTQNFHLE (103 aa). Asparagine 102 is a glycosylation site (N-linked (GlcNAc...) asparagine). The helical transmembrane segment at 124 to 146 threads the bilayer; that stretch reads VGLIILSVVFAVCLLACLLGVAL. Over 147-509 the chain is Cytoplasmic; the sequence is RKFKRRNQER…NSLDKLKTDC (363 aa). A GS domain is found at 178-207; the sequence is STLADLLDHSCTSGSGSGLPFLVQRTVARQ. The region spanning 208–502 is the Protein kinase domain; it reads ITLLECVGKG…KTLTKIDNSL (295 aa). ATP is bound by residues 214-222 and lysine 235; that span reads VGKGRYGEV. Aspartate 336 serves as the catalytic Proton acceptor. The residue at position 501 (serine 501) is a Phosphoserine.

It belongs to the protein kinase superfamily. TKL Ser/Thr protein kinase family. TGFB receptor subfamily. In terms of assembly, interacts with FKBP1A. Interacts with FCHO1. Interacts with CLU. Interacts with type II receptors AMHR2 and ACVR2A. Interacts with BMP7. Interacts with BMP9. Interacts with BMP6 (when glycosylated); the interaction may induce HAMP expression. Interacts with TSC22D1/TSC-22. Requires Mg(2+) as cofactor. Mn(2+) serves as cofactor.

The protein resides in the membrane. The catalysed reaction is L-threonyl-[receptor-protein] + ATP = O-phospho-L-threonyl-[receptor-protein] + ADP + H(+). The enzyme catalyses L-seryl-[receptor-protein] + ATP = O-phospho-L-seryl-[receptor-protein] + ADP + H(+). Functionally, bone morphogenetic protein (BMP) type I receptor that is involved in a wide variety of biological processes, including bone, heart, cartilage, nervous, and reproductive system development and regulation. As a type I receptor, forms heterotetrameric receptor complexes with the type II receptors AMHR2, ACVR2A ors ACVR2B. Upon binding of ligands such as BMP7 or BMP9 to the heteromeric complexes, type II receptors transphosphorylate ACVR1 intracellular domain. In turn, ACVR1 kinase domain is activated and subsequently phosphorylates SMAD1/5/8 proteins that transduce the signal. In addition to its role in mediating BMP pathway-specific signaling, suppresses TGFbeta/activin pathway signaling by interfering with the binding of activin to its type II receptor. Besides canonical SMAD signaling, can activate non-canonical signaling pathways. May promote the expression of HAMP, potentially via its interaction with BMP6. The sequence is that of Activin receptor type-1 (ACVR1) from Bos taurus (Bovine).